We begin with the raw amino-acid sequence, 304 residues long: tRNA uridine(34) hydroxylase (304 aa).

Residues 124–219 form the Rhodanese domain; sequence QDEETLLIDT…YLETIPKEDS (96 aa). Cys179 acts as the Cysteine persulfide intermediate in catalysis.

It belongs to the TrhO family.

The enzyme catalyses uridine(34) in tRNA + AH2 + O2 = 5-hydroxyuridine(34) in tRNA + A + H2O. Catalyzes oxygen-dependent 5-hydroxyuridine (ho5U) modification at position 34 in tRNAs. In Bartonella henselae (strain ATCC 49882 / DSM 28221 / CCUG 30454 / Houston 1) (Rochalimaea henselae), this protein is tRNA uridine(34) hydroxylase.